We begin with the raw amino-acid sequence, 303 residues long: tRNA pseudouridine synthase B (303 aa).

The active-site Nucleophile is the Asp47.

It belongs to the pseudouridine synthase TruB family. Type 1 subfamily.

It carries out the reaction uridine(55) in tRNA = pseudouridine(55) in tRNA. In terms of biological role, responsible for synthesis of pseudouridine from uracil-55 in the psi GC loop of transfer RNAs. The protein is tRNA pseudouridine synthase B of Legionella pneumophila (strain Paris).